The following is a 92-amino-acid chain: Small ribosomal subunit protein uS19 (92 aa).

Belongs to the universal ribosomal protein uS19 family.

Functionally, protein S19 forms a complex with S13 that binds strongly to the 16S ribosomal RNA. The polypeptide is Small ribosomal subunit protein uS19 (Caulobacter sp. (strain K31)).